The sequence spans 352 residues: Dihydrorhizobitoxine desaturase (352 aa).

3 helical membrane-spanning segments follow: residues 53–73 (LATL…IGAY), 89–109 (LAKN…YPLF), and 204–224 (IGIL…LFWI).

The protein belongs to the fatty acid desaturase type 1 family.

It localises to the cell inner membrane. It carries out the reaction dihydrorhizobitoxine + 2 reduced [2Fe-2S]-[ferredoxin] + O2 + 2 H(+) = rhizobitoxine + 2 oxidized [2Fe-2S]-[ferredoxin] + 2 H2O. Its function is as follows. Involved in the biosynthesis of the nodulation enhancer compound rhizobitoxine. Catalyzes the final step of the pathway, the introduction of a carbon double bond into the C3 position of dihydrorhizobitoxine to produce rhizobitoxine. This is Dihydrorhizobitoxine desaturase from Bradyrhizobium elkanii.